The primary structure comprises 58 residues: Mu-diguetoxin-Dc1b (58 aa).

4 cysteine pairs are disulfide-bonded: cysteine 12-cysteine 26, cysteine 20-cysteine 40, cysteine 25-cysteine 54, and cysteine 42-cysteine 52.

It belongs to the neurotoxin 26 (DTX) family. Expressed by the venom gland.

It localises to the secreted. In terms of biological role, acts by delaying the inactivation of presynaptic voltage-sensitive sodium channels (Nav). Acts against insects and cause a progressive spastic paralysis. This is Mu-diguetoxin-Dc1b from Diguetia canities (Desert bush spider).